Here is a 348-residue protein sequence, read N- to C-terminus: Type II methyltransferase M.BglI (348 aa).

It belongs to the N(4)/N(6)-methyltransferase family.

It catalyses the reaction a 2'-deoxycytidine in DNA + S-adenosyl-L-methionine = an N(4)-methyl-2'-deoxycytidine in DNA + S-adenosyl-L-homocysteine + H(+). A beta subtype methylase, recognizes the double-stranded sequence 5'-GCCNNNNNGGC-3', methylates C-2 on both strands, and protects the DNA from cleavage by the BglI endonuclease. In Bacillus subtilis, this protein is Type II methyltransferase M.BglI (bglIM).